A 204-amino-acid polypeptide reads, in one-letter code: Small ribosomal subunit protein uS3 (204 aa).

Residues 37–105 (IRSYINESFK…NVEVNVVGVK (69 aa)) enclose the KH type-2 domain.

Belongs to the universal ribosomal protein uS3 family. As to quaternary structure, part of the 30S ribosomal subunit. Forms a tight complex with proteins S10 and S14.

Functionally, binds the lower part of the 30S subunit head. Binds mRNA in the 70S ribosome, positioning it for translation. The sequence is that of Small ribosomal subunit protein uS3 from Wolbachia pipientis wMel.